Reading from the N-terminus, the 183-residue chain is uncharacterized protein (183 aa).

This is an uncharacterized protein from Shigella flexneri.